A 1527-amino-acid polypeptide reads, in one-letter code: Peroxidasin (1527 aa).

A signal peptide spans 1–23 (MRFMLLMLQLLGLLLLLAGGVQS). The LRRNT domain occupies 24 to 53 (VYCPAGCTCLERTVRCIRAKLSAVPKLPQD). LRR repeat units lie at residues 51 to 74 (PQDT…AFSG), 75 to 98 (LAQL…ALNG), 99 to 122 (LTAL…IFQR), 124 to 146 (PRLE…LFDN), 147 to 170 (LPRL…GFNR), and 172 to 196 (NNLK…LWRR). Ig-like C2-type domains are found at residues 236–322 (PQFL…QPVR), 365–453 (PHFT…ARIE), 458–545 (PEIL…ATIK), and 553–643 (PQLA…ALVT). 4 disulfides stabilise this stretch: C257–C307, C388–C437, C479–C529, and C574–C627. An N-linked (GlcNAc...) asparagine glycan is attached at N419. Residues N616, N673, N682, N731, and N767 are each glycosylated (N-linked (GlcNAc...) asparagine). C768 and C784 form a disulfide bridge. A heme b-binding site is contributed by D862. H863 (proton acceptor) is an active-site residue. D864 provides a ligand contact to Ca(2+). 2 cysteine pairs are disulfide-bonded: C882–C892 and C886–C909. Ca(2+) is bound by residues T941, Y943, D945, and S947. A glycan (N-linked (GlcNAc...) asparagine) is linked at N962. A disulfide bridge links C994 with C1005. Residues E1015 and H1109 each coordinate heme b. 2 N-linked (GlcNAc...) asparagine glycosylation sites follow: N1120 and N1213. Cystine bridges form between C1212–C1269 and C1310–C1336. Residues 1403-1441 (NEERVSGLEELIGSFQKELKKLHKKLRKLEDSCNSADSE) adopt a coiled-coil conformation. In terms of domain architecture, VWFC spans 1463 to 1524 (SHCVDDKGTT…PPEACCPHCP (62 aa)).

Belongs to the peroxidase family. XPO subfamily. In terms of assembly, homotrimer; disulfide-linked. Requires Ca(2+) as cofactor. Heme b is required as a cofactor. As to expression, expressed in hemocytes. Also expressed in the fat body and gastric caeca.

It is found in the secreted. The catalysed reaction is (5R)-5-hydroxy-L-lysyl-[collagen] + L-methionyl-[collagen] + H2O2 = [collagen]-(5R)-5-hydroxy-L-lysyl-N-S-L-methionyl-[collagen] + 2 H2O + H(+). The enzyme catalyses bromide + H2O2 = hypobromite + H2O. It carries out the reaction (5R)-5-hydroxy-L-lysyl-[collagen] + L-methionyl-[collagen] + hypobromite = [collagen]-(5R)-5-hydroxy-L-lysyl-N-S-L-methionyl-[collagen] + bromide + H2O + H(+). It catalyses the reaction L-lysyl-[collagen] + L-methionyl-[collagen] + H2O2 = [collagen]-L-lysyl-N-S-L-methionyl-[collagen] + 2 H2O + H(+). The catalysed reaction is L-lysyl-[collagen] + L-methionyl-[collagen] + hypobromite = [collagen]-L-lysyl-N-S-L-methionyl-[collagen] + bromide + H2O + H(+). The enzyme catalyses L-tyrosyl-[protein] + bromide + H2O2 + H(+) = 3-bromo-L-tyrosyl-[protein] + 2 H2O. It carries out the reaction hypobromite + L-tyrosyl-[protein] + H(+) = 3-bromo-L-tyrosyl-[protein] + H2O. Functionally, catalyzes the two-electron oxidation of bromide by hydrogen peroxide and generates hypobromite as a reactive intermediate which mediates the formation of sulfilimine cross-links between methionine and hydroxylysine residues within an uncross-linked collagen IV NC1 hexamer. Plays a role in extracellular matrix consolidation, phagocytosis and defense. The protein is Peroxidasin of Drosophila melanogaster (Fruit fly).